Reading from the N-terminus, the 173-residue chain is 3-isopropylmalate dehydratase small subunit (173 aa).

This sequence belongs to the LeuD family. LeuD type 2 subfamily. In terms of assembly, heterodimer of LeuC and LeuD.

It catalyses the reaction (2R,3S)-3-isopropylmalate = (2S)-2-isopropylmalate. Its pathway is amino-acid biosynthesis; L-leucine biosynthesis; L-leucine from 3-methyl-2-oxobutanoate: step 2/4. Functionally, catalyzes the isomerization between 2-isopropylmalate and 3-isopropylmalate, via the formation of 2-isopropylmaleate. The sequence is that of 3-isopropylmalate dehydratase small subunit from Caldicellulosiruptor saccharolyticus (strain ATCC 43494 / DSM 8903 / Tp8T 6331).